The primary structure comprises 433 residues: 23S rRNA (uracil(1939)-C(5))-methyltransferase RlmD (433 aa).

The 59-residue stretch at 10 to 68 folds into the TRAM domain; sequence RTTTRQIITVSVNDLDSFGQGVARHNGKTLFIPGLLPQENAEVTVTEDKKQYARAKVVR. Residues Cys81, Cys87, Cys90, and Cys162 each contribute to the [4Fe-4S] cluster site. Residues Gln265, Phe294, Asn299, Glu315, Asn342, and Asp363 each contribute to the S-adenosyl-L-methionine site. Residue Cys389 is the Nucleophile of the active site.

This sequence belongs to the class I-like SAM-binding methyltransferase superfamily. RNA M5U methyltransferase family. RlmD subfamily.

It carries out the reaction uridine(1939) in 23S rRNA + S-adenosyl-L-methionine = 5-methyluridine(1939) in 23S rRNA + S-adenosyl-L-homocysteine + H(+). Its function is as follows. Catalyzes the formation of 5-methyl-uridine at position 1939 (m5U1939) in 23S rRNA. In Shigella boydii serotype 4 (strain Sb227), this protein is 23S rRNA (uracil(1939)-C(5))-methyltransferase RlmD.